The following is a 71-amino-acid chain: Ranatuerin-2PLa (71 aa).

An N-terminal signal peptide occupies residues 1 to 22; that stretch reads MFTTKKSMLLFFFLGTISLSLC. Positions 23–41 are excised as a propeptide; sequence EQERGADEDDGVEMTEEEV. A disulfide bridge links C66 with C71.

Expressed by the skin glands.

The protein localises to the secreted. Functionally, may have antimicrobial activity against the Gram-negative bacterium E.coli. The sequence is that of Ranatuerin-2PLa from Lithobates palustris (Pickerel frog).